The sequence spans 93 residues: Parbolysin P5 (93 aa).

Cystine bridges form between Cys-16–Cys-37, Cys-22–Cys-33, and Cys-47–Cys-60.

The protein belongs to the worm cytolysin family. Localized within the skin and proboscis and are most readily isolated from body mucus secretions.

The protein resides in the secreted. Cytolysin that shows hemolytic activity (on bovine erythrocytes, HC(50)=5.75 mg/ml). This hemolytic activity is completely inhibited by small unilamelar vesicles composed of PC/PG, PC/PI and PC/PS in 1:1 molar ratios (with at least 100 mg/ml concentration). This chain is Parbolysin P5, found in Parborlasia corrugatus (Antarctic nemertean worm).